Consider the following 621-residue polypeptide: Phytoene desaturase (621 aa).

An N-terminal signal peptide occupies residues 1-23; it reads MPSTSKRPTAIVIGSGVGGVSTA. Residues 394 to 425 form a disordered region; it reads HASQAHQLSASRNGHISSASPPDQPGLTPTEK. Polar residues predominate over residues 397-414; the sequence is QAHQLSASRNGHISSASP. A helical membrane pass occupies residues 598-618; it reads WEQWVSVLIYLLVGIFAWLWM.

This sequence belongs to the carotenoid/retinoid oxidoreductase family. NAD(+) serves as cofactor.

The protein resides in the membrane. The enzyme catalyses 15-cis-phytoene + 5 A = all-trans-3,4-didehydrolycopene + 5 AH2. It functions in the pathway carotenoid biosynthesis; lycopene biosynthesis. In terms of biological role, phytoene desaturase involved in the carotenoid biosynthesis pathway. Converts phytoene into 3,4-didehydrolycopene via the intermediary of phytofluene, zeta-carotene, neurosporene and lycopene, by introducing up to five double bonds into phytoene. This chain is Phytoene desaturase (PDH1), found in Cercospora nicotianae (Barn spot disease fungus).